A 548-amino-acid polypeptide reads, in one-letter code: Tryprostatin B 6-hydroxylase (548 aa).

3 consecutive transmembrane segments (helical) span residues 5–25, 35–54, and 73–93; these read MKCG…LWYF, WRYV…LLYA, and LLMV…RTLF. Cysteine 491 contributes to the heme binding site.

It belongs to the cytochrome P450 family. Heme is required as a cofactor.

It is found in the membrane. It carries out the reaction tryprostatin B + reduced [NADPH--hemoprotein reductase] + O2 = 6-hydroxytryprostatin B + oxidized [NADPH--hemoprotein reductase] + H2O + H(+). The protein operates within mycotoxin biosynthesis. Cytochrome P450 monooxygenase; part of the gene cluster that mediates the biosynthesis of fumitremorgins, indole alkaloids that carry not only intriguing chemical structures, but also interesting biological and pharmacological activities. The biosynthesis of fumitremorgin-type alkaloids begins by condensation of the two amino acids L-tryptophan and L-proline to brevianamide F, catalyzed by the non-ribosomal peptide synthetase ftmPS/ftmA. Brevianamide F is then prenylated by the prenyltransferase ftmPT1/ftmB in the presence of dimethylallyl diphosphate, resulting in the formation of tryprostatin B. The three cytochrome P450 monooxygenases, ftmP450-1/ftmC, ftmP450-2/ftmE and ftmP450-3/FtmG, are responsible for the conversion of tryprostatin B to 6-hydroxytryprostatin B, tryprostatin A to fumitremorgin C and fumitremorgin C to 12,13-dihydroxyfumitremorgin C, respectively. The putative methyltransferase ftmMT/ftmD is expected for the conversion of 6-hydroxytryprostatin B to tryprostatin A. FtmPT2/FtmH catalyzes the prenylation of 12,13-dihydroxyfumitre-morgin C in the presence of dimethylallyl diphosphate, resulting in the formation of fumitremorgin B. Fumitremorgin B is further converted to verruculogen by ftmOx1/ftmF via the insertion of an endoperoxide bond between the two prenyl moieties. Finally, verruculogen is further converted to fumitremorgin A by the verruculogen prenyltransferase ftmPT3. The protein is Tryprostatin B 6-hydroxylase of Neosartorya fischeri (strain ATCC 1020 / DSM 3700 / CBS 544.65 / FGSC A1164 / JCM 1740 / NRRL 181 / WB 181) (Aspergillus fischerianus).